Here is a 237-residue protein sequence, read N- to C-terminus: Pyridoxal phosphate homeostasis protein (237 aa).

N6-(pyridoxal phosphate)lysine is present on lysine 31.

Belongs to the pyridoxal phosphate-binding protein YggS/PROSC family.

The protein resides in the cytoplasm. The protein localises to the nucleus. Its function is as follows. Pyridoxal 5'-phosphate (PLP)-binding protein, which may be involved in intracellular homeostatic regulation of pyridoxal 5'-phosphate (PLP), the active form of vitamin B6. In Schizosaccharomyces pombe (strain 972 / ATCC 24843) (Fission yeast), this protein is Pyridoxal phosphate homeostasis protein.